The primary structure comprises 400 residues: General L-amino acid transport system permease protein AapQ (400 aa).

The next 8 helical transmembrane spans lie at 29–49, 100–120, 142–162, 188–208, 225–245, 264–284, 340–360, and 367–387; these read SIFYQILTIVILVGFVWWVAH, LLVAVTGIFTATIIGFLIGIG, IPPLLVIFFWYLGVLSVLPQP, TGMIAVGIALVIAIVASIIIA, VWTAIALIVGLPLLVFVVSGF, VVGPEFMSLFLALSFYTASFI, NSSLAIAIGFSDLVAVGGTIL, and IEIVCIWGIVYLSLSILTSLF. The region spanning 96–388 is the ABC transmembrane type-1 domain; that stretch reads ILNTLLVAVT…SLSILTSLFM (293 aa).

It belongs to the binding-protein-dependent transport system permease family. HisMQ subfamily.

The protein resides in the cell inner membrane. Functionally, part of a binding-protein-dependent transport system for L-amino acids, affects the uptake as well as efflux of these amino acids. Probably responsible for the translocation of the substrate across the membrane. This chain is General L-amino acid transport system permease protein AapQ (aapQ), found in Rhizobium johnstonii (strain DSM 114642 / LMG 32736 / 3841) (Rhizobium leguminosarum bv. viciae).